The following is a 155-amino-acid chain: Photosystem II extrinsic protein V (155 aa).

Positions 1 to 20 are cleaved as a signal peptide; it reads MFVKMIGWLVLFLFAHQTWA. The heme c site is built by C50, C53, H54, and H105.

It belongs to the cytochrome c family. PsbV subfamily. PSII is composed of 1 copy each of membrane proteins PsbA, PsbB, PsbC, PsbD, PsbE, PsbF, PsbH, PsbI, PsbJ, PsbK, PsbL, PsbM, PsbT, PsbY, PsbZ, Psb30/Ycf12, at least 3 peripheral proteins of the oxygen-evolving complex and a large number of cofactors. It forms dimeric complexes. The extrinsic subunits in red algae are PsbO (OEC33), PsbQ', cytochrome c-550 and PsbU. The cofactor is heme c.

It is found in the plastid. Its subcellular location is the chloroplast thylakoid membrane. Functionally, one of the extrinsic, lumenal subunits of photosystem II (PSII). PSII is a light-driven water plastoquinone oxidoreductase, using light energy to abstract electrons from H(2)O, generating a proton gradient subsequently used for ATP formation. The extrinsic proteins stabilize the structure of photosystem II oxygen-evolving complex (OEC), the ion environment of oxygen evolution and protect the OEC against heat-induced inactivation. Unlike the T.vulcanus ortholog, it does not bind by itself to PSII, but requires all extrinsic members of the OEC. In Cyanidium caldarium (Red alga), this protein is Photosystem II extrinsic protein V.